Reading from the N-terminus, the 103-residue chain is Protein SUP-1 (103 aa).

The signal sequence occupies residues 1-16 (MMSYIALAACIGLAMA). At 17-75 (ANVDHDVKSAVNEVTTTKDGDTYCPVPLVGTKCGTSSIFHYWKCCGELNKECCFNLQTW) the chain is on the extracellular side. Residues 76–96 (VWVTLALFGVIFIASFVISLV) traverse the membrane as a helical segment. Topologically, residues 97–103 (RCICCRK) are cytoplasmic.

In terms of tissue distribution, expressed in a subset of neurons and in body wall muscles. In the nervous system, expressed specifically in cholinergic motor neurons of the ventral nerve cord, a subset of cholinergic head neurons, anterior sublateral neurons, and body sublateral neurons (at protein level).

It localises to the cell membrane. The protein localises to the perikaryon. The protein resides in the cell projection. Its subcellular location is the synapse. It is found in the cytoplasmic vesicle. It localises to the secretory vesicle. The protein localises to the synaptic vesicle. Functionally, may be involved in trafficking or stabilization of the vesicular acetylcholine transporter unc-17. The polypeptide is Protein SUP-1 (Caenorhabditis elegans).